A 194-amino-acid chain; its full sequence is ATP-dependent Clp protease proteolytic subunit (194 aa).

Serine 98 functions as the Nucleophile in the catalytic mechanism. Histidine 123 is an active-site residue.

Belongs to the peptidase S14 family. As to quaternary structure, fourteen ClpP subunits assemble into 2 heptameric rings which stack back to back to give a disk-like structure with a central cavity, resembling the structure of eukaryotic proteasomes.

It localises to the cytoplasm. The enzyme catalyses Hydrolysis of proteins to small peptides in the presence of ATP and magnesium. alpha-casein is the usual test substrate. In the absence of ATP, only oligopeptides shorter than five residues are hydrolyzed (such as succinyl-Leu-Tyr-|-NHMec, and Leu-Tyr-Leu-|-Tyr-Trp, in which cleavage of the -Tyr-|-Leu- and -Tyr-|-Trp bonds also occurs).. Functionally, cleaves peptides in various proteins in a process that requires ATP hydrolysis. Has a chymotrypsin-like activity. Plays a major role in the degradation of misfolded proteins. The sequence is that of ATP-dependent Clp protease proteolytic subunit from Aliarcobacter butzleri (strain RM4018) (Arcobacter butzleri).